The following is a 304-amino-acid chain: Ribosomal RNA small subunit methyltransferase H (304 aa).

S-adenosyl-L-methionine-binding positions include 47–49, Asp-66, Phe-93, Asp-108, and Gln-115; that span reads GGH.

It belongs to the methyltransferase superfamily. RsmH family.

The protein resides in the cytoplasm. The enzyme catalyses cytidine(1402) in 16S rRNA + S-adenosyl-L-methionine = N(4)-methylcytidine(1402) in 16S rRNA + S-adenosyl-L-homocysteine + H(+). Its function is as follows. Specifically methylates the N4 position of cytidine in position 1402 (C1402) of 16S rRNA. This chain is Ribosomal RNA small subunit methyltransferase H, found in Prochlorococcus marinus (strain NATL2A).